The chain runs to 166 residues: Large ribosomal subunit protein uL10 (166 aa).

It belongs to the universal ribosomal protein uL10 family. Part of the ribosomal stalk of the 50S ribosomal subunit. The N-terminus interacts with L11 and the large rRNA to form the base of the stalk. The C-terminus forms an elongated spine to which L12 dimers bind in a sequential fashion forming a multimeric L10(L12)X complex.

Its function is as follows. Forms part of the ribosomal stalk, playing a central role in the interaction of the ribosome with GTP-bound translation factors. The protein is Large ribosomal subunit protein uL10 of Pseudomonas entomophila (strain L48).